The primary structure comprises 427 residues: MFKLSVIEELLAHVDKNKEELLALVQTLVAYPTPSPPARNTADAQQYIRTYCEKLGCNVDMWDVYPNDPNVVAVLKGTYSESYRSLILNGHIDVAAVDESEEWKTPPFEATVNQGVIRGRGVADMKGGLAACLFAMKTLHAFNIQLPGDLIFQSVVGEEVGEAGTKSCCERGYTADLAIVSDTSHCEIQGQGGVITGWITVKSPVTFHDGTRRNLIHAGGGEFGASAIEKMMKLIQGLQELERHWAVTKSSPGFPPGMNTINPAFIEGGRHPAFIADECKLWITIHYYPHESYEEIVREVEEHLLHVAKADPWMREHPPSFSWGGTSMIEDKGEIFPAFQIDEQSDAVQLLKKIHYHLTGEEVKTSMSQTVTDGGWLAEAGIPTLLFGPGKLEDAHSVNEELEIAELVQYTKTLLTFIYEWCHLRKA.

H91 is a Zn(2+) binding site. D93 is a catalytic residue. Residue D124 participates in Zn(2+) binding. E158 serves as the catalytic Proton acceptor. Zn(2+) is bound by residues E159, D182, and H396.

The protein belongs to the peptidase M20A family. Zn(2+) is required as a cofactor. The cofactor is Co(2+).

It catalyses the reaction N-formyl-4-amino-5-aminomethyl-2-methylpyrimidine + H2O = 4-amino-5-aminomethyl-2-methylpyrimidine + formate. Its pathway is cofactor biosynthesis; thiamine diphosphate biosynthesis. Its function is as follows. Catalyzes the deformylation of the formylaminopyrimidine N-formyl-4-amino-5-aminomethyl-2-methylpyrimidine (FAMP) to give the corresponding aminopyrimidine. This chain is N-formyl-4-amino-5-aminomethyl-2-methylpyrimidine deformylase, found in Halalkalibacterium halodurans (strain ATCC BAA-125 / DSM 18197 / FERM 7344 / JCM 9153 / C-125) (Bacillus halodurans).